The following is a 254-amino-acid chain: Persulfide dioxygenase ETHE1, mitochondrial (254 aa).

A mitochondrion-targeting transit peptide spans 1-7 (MASAVVR). Ser14, Ser17, and Ser19 each carry phosphoserine. Lys32 carries the N6-acetyllysine; alternate modification. Position 32 is an N6-succinyllysine; alternate (Lys32). Lys66 carries the post-translational modification N6-acetyllysine. 3 residues coordinate Fe cation: His79, His135, and Asp154. Lys172 bears the N6-acetyllysine; alternate mark. Lys172 bears the N6-succinyllysine; alternate mark.

The protein belongs to the metallo-beta-lactamase superfamily. Glyoxalase II family. Homodimer. Monomer. Interacts with TST. May interact with RELA. The cofactor is Fe(2+).

Its subcellular location is the cytoplasm. The protein resides in the nucleus. The protein localises to the mitochondrion matrix. The catalysed reaction is S-sulfanylglutathione + O2 + H2O = sulfite + glutathione + 2 H(+). In terms of biological role, first described as a protein that can shuttle between the nucleus and the cytoplasm and suppress p53-induced apoptosis by sequestering the transcription factor RELA/NFKB3 in the cytoplasm and preventing its accumulation in the nucleus. Sulfur dioxygenase that plays an essential role in hydrogen sulfide catabolism in the mitochondrial matrix. Hydrogen sulfide (H(2)S) is first oxidized by SQRDL, giving rise to cysteine persulfide residues. ETHE1 consumes molecular oxygen to catalyze the oxidation of the persulfide, once it has been transferred to a thiophilic acceptor, such as glutathione (R-SSH). Plays an important role in metabolic homeostasis in mitochondria by metabolizing hydrogen sulfide and preventing the accumulation of supraphysiological H(2)S levels that have toxic effects, due to the inhibition of cytochrome c oxidase. In Mus musculus (Mouse), this protein is Persulfide dioxygenase ETHE1, mitochondrial (Ethe1).